The primary structure comprises 87 residues: Omega-lycotoxin-Am1b (87 aa).

The first 17 residues, 1 to 17 (MKLSIFFVLFFIAIAYC), serve as a signal peptide directing secretion. A propeptide spanning residues 18–40 (QPEFLDDEEDEVEETLPVAEEGR) is cleaved from the precursor. Disulfide bonds link Cys-44-Cys-59, Cys-51-Cys-64, Cys-58-Cys-84, and Cys-66-Cys-82.

Belongs to the neurotoxin omega-lctx family. In terms of tissue distribution, expressed by the venom gland.

The protein localises to the secreted. In terms of biological role, modulates Cav2.1/CACNA1A voltage-gated calcium channels (P/Q-type currents) in rat cerebellar Purkinje cells and hippocampal CA1-CA3 neurons. At saturating concentrations (&gt;10 nM) decelerates activation kinetics and slightly increases peak amplitude without affecting deactivation kinetics. In vivo, does not cause death when intravenously injected into mice. In rat models, through its activity on Cav2.1/CACNA1A, has an ameliorative effect on memory defects provoked by hyperstimulation of N-methyl-D-aspartate receptors (NMDARs) in the hippocampus. The sequence is that of Omega-lycotoxin-Am1b from Alopecosa marikovskyi (Wolf spider).